The chain runs to 264 residues: Thiazole synthase (264 aa).

The active-site Schiff-base intermediate with DXP is the K106. Residues G167, 193 to 194 (AG), and 215 to 216 (NS) each bind 1-deoxy-D-xylulose 5-phosphate.

This sequence belongs to the ThiG family. As to quaternary structure, homotetramer. Forms heterodimers with either ThiH or ThiS.

It localises to the cytoplasm. It catalyses the reaction [ThiS sulfur-carrier protein]-C-terminal-Gly-aminoethanethioate + 2-iminoacetate + 1-deoxy-D-xylulose 5-phosphate = [ThiS sulfur-carrier protein]-C-terminal Gly-Gly + 2-[(2R,5Z)-2-carboxy-4-methylthiazol-5(2H)-ylidene]ethyl phosphate + 2 H2O + H(+). It participates in cofactor biosynthesis; thiamine diphosphate biosynthesis. Its function is as follows. Catalyzes the rearrangement of 1-deoxy-D-xylulose 5-phosphate (DXP) to produce the thiazole phosphate moiety of thiamine. Sulfur is provided by the thiocarboxylate moiety of the carrier protein ThiS. In vitro, sulfur can be provided by H(2)S. This Pseudomonas fluorescens (strain Pf0-1) protein is Thiazole synthase.